Consider the following 315-residue polypeptide: Melanoma-associated antigen 9 (315 aa).

A compositionally biased stretch (basic and acidic residues) spans 1–13 (MSLEQRSPHCKPD). Positions 1 to 67 (MSLEQRSPHC…PQSPQGGASS (67 aa)) are disordered. Positions 50–67 (SAAGSSSPPQSPQGGASS) are enriched in low complexity. One can recognise an MAGE domain in the interval 108–307 (LKLKVAELVH…ICYPSLYEEV (200 aa)).

In terms of tissue distribution, expressed in many tumors of several types, such as melanoma, head and neck squamous cell carcinoma, lung carcinoma and breast carcinoma, but not in normal tissues except for testes and placenta.

Not known, though may play a role in embryonal development and tumor transformation or aspects of tumor progression. This chain is Melanoma-associated antigen 9 (MAGEA9), found in Homo sapiens (Human).